The chain runs to 88 residues: MANSKSAKKRALQSEKRRQHNASRRSMLRTYVKKVIAAIKAGDHKTAAEAFAVAQPIVDRMATKGLIHKNKAARQKARLNAKIKAIAA.

The segment at 1–27 is disordered; sequence MANSKSAKKRALQSEKRRQHNASRRSM.

This sequence belongs to the bacterial ribosomal protein bS20 family.

In terms of biological role, binds directly to 16S ribosomal RNA. This chain is Small ribosomal subunit protein bS20, found in Shewanella baltica (strain OS223).